We begin with the raw amino-acid sequence, 203 residues long: DNA-directed RNA polymerase subunit gamma (203 aa).

4 residues coordinate Zn(2+): Cys34, Cys36, Cys49, and Cys52.

It belongs to the RNA polymerase beta' chain family. RpoC1 subfamily. As to quaternary structure, in cyanobacteria the RNAP catalytic core is composed of 2 alpha, 1 beta, 1 beta', 1 gamma and 1 omega subunit. When a sigma factor is associated with the core the holoenzyme is formed, which can initiate transcription. Zn(2+) serves as cofactor.

The enzyme catalyses RNA(n) + a ribonucleoside 5'-triphosphate = RNA(n+1) + diphosphate. In terms of biological role, DNA-dependent RNA polymerase catalyzes the transcription of DNA into RNA using the four ribonucleoside triphosphates as substrates. The protein is DNA-directed RNA polymerase subunit gamma (rpoC1) of Prochloron sp.